Here is a 279-residue protein sequence, read N- to C-terminus: uncharacterized protein (279 aa).

The disordered stretch occupies residues 60–92; the sequence is RKANKLNNKQDSTFFNSASGETNNTILPPGVKN. Residues 70–85 are compositionally biased toward polar residues; it reads DSTFFNSASGETNNTI. 3 consecutive transmembrane segments (helical) span residues 156–176, 202–222, and 237–257; these read IVGY…AVMN, ISIF…ILFL, and FIWI…LLMI.

Its subcellular location is the cell membrane. This is an uncharacterized protein from Mycoplasma genitalium (strain ATCC 33530 / DSM 19775 / NCTC 10195 / G37) (Mycoplasmoides genitalium).